Here is a 273-residue protein sequence, read N- to C-terminus: Urease accessory protein UreD (273 aa).

The interval 1 to 29 is disordered; it reads MLMRTATPLDQPRAIGSARVSSKRVNGGS.

This sequence belongs to the UreD family. As to quaternary structure, ureD, UreF and UreG form a complex that acts as a GTP-hydrolysis-dependent molecular chaperone, activating the urease apoprotein by helping to assemble the nickel containing metallocenter of UreC. The UreE protein probably delivers the nickel.

The protein resides in the cytoplasm. Functionally, required for maturation of urease via the functional incorporation of the urease nickel metallocenter. The protein is Urease accessory protein UreD of Roseobacter denitrificans (strain ATCC 33942 / OCh 114) (Erythrobacter sp. (strain OCh 114)).